We begin with the raw amino-acid sequence, 627 residues long: tRNA uridine 5-carboxymethylaminomethyl modification enzyme MnmG (627 aa).

Residues Gly13–Gly18, Val125, and Ser180 contribute to the FAD site. Gly274 to Phe288 contributes to the NAD(+) binding site. An FAD-binding site is contributed by Gln371.

The protein belongs to the MnmG family. Homodimer. Heterotetramer of two MnmE and two MnmG subunits. FAD serves as cofactor.

It is found in the cytoplasm. In terms of biological role, NAD-binding protein involved in the addition of a carboxymethylaminomethyl (cmnm) group at the wobble position (U34) of certain tRNAs, forming tRNA-cmnm(5)s(2)U34. The polypeptide is tRNA uridine 5-carboxymethylaminomethyl modification enzyme MnmG (Francisella philomiragia subsp. philomiragia (strain ATCC 25017 / CCUG 19701 / FSC 153 / O#319-036)).